The following is a 185-amino-acid chain: Large ribosomal subunit protein uL5m (185 aa).

Belongs to the universal ribosomal protein uL5 family.

It is found in the mitochondrion. In Brassica napus (Rape), this protein is Large ribosomal subunit protein uL5m (RPL5).